The chain runs to 545 residues: T-complex protein 1 subunit gamma (545 aa).

The residue at position 1 (methionine 1) is an N-acetylmethionine. Residues 1 to 24 are disordered; sequence MMGHRPVLVLSQNTKRESGRKVQS. A Phosphoserine modification is found at serine 11. Lysine 15 is covalently cross-linked (Glycyl lysine isopeptide (Lys-Gly) (interchain with G-Cter in SUMO2)). Residue glycine 42 participates in ADP binding. Glycine 42 provides a ligand contact to ATP. Residue aspartate 93 coordinates Mg(2+). ADP contacts are provided by glycine 94, threonine 95, threonine 96, serine 97, threonine 162, and lysine 163. The ATP site is built by glycine 94, threonine 95, and threonine 96. Serine 170 is modified (phosphoserine). At lysine 222 the chain carries N6-acetyllysine. A phosphoserine mark is found at serine 243 and serine 244. A Phosphotyrosine modification is found at tyrosine 247. Glycyl lysine isopeptide (Lys-Gly) (interchain with G-Cter in SUMO2) cross-links involve residues lysine 248 and lysine 249. At serine 252 the chain carries Phosphoserine. Cysteine 366 and cysteine 372 are joined by a disulfide. Lysine 381 participates in a covalent cross-link: Glycyl lysine isopeptide (Lys-Gly) (interchain with G-Cter in SUMO2). Glycine 411 is an ADP binding site. Glycine 411 is a binding site for ATP. Threonine 430 and threonine 459 each carry phosphothreonine. Residues glycine 482, glutamate 483, glutamate 497, and lysine 502 each coordinate ADP. ATP is bound at residue glycine 482. Glutamate 497 is an ATP binding site. The interval 526–545 is disordered; that stretch reads HKKKGDDQNRQTGAPDAGQE.

It belongs to the TCP-1 chaperonin family. Component of the chaperonin-containing T-complex (TRiC), a hexadecamer composed of two identical back-to-back stacked rings enclosing a protein folding chamber. Each ring is made up of eight different subunits: TCP1/CCT1, CCT2, CCT3, CCT4, CCT5, CCT6A/CCT6, CCT7, CCT8. Interacts with PACRG. Interacts with DNAAF4. Interacts with DLEC1. Post-translationally, the N-terminus is blocked.

It localises to the cytoplasm. It catalyses the reaction ATP + H2O = ADP + phosphate + H(+). Component of the chaperonin-containing T-complex (TRiC), a molecular chaperone complex that assists the folding of actin, tubulin and other proteins upon ATP hydrolysis. The TRiC complex mediates the folding of WRAP53/TCAB1, thereby regulating telomere maintenance. As part of the TRiC complex may play a role in the assembly of BBSome, a complex involved in ciliogenesis regulating transports vesicles to the cilia. This Mus musculus (Mouse) protein is T-complex protein 1 subunit gamma (Cct3).